The chain runs to 276 residues: ATP synthase subunit delta (276 aa).

It belongs to the ATPase delta chain family. F-type ATPases have 2 components, F(1) - the catalytic core - and F(0) - the membrane proton channel. F(1) has five subunits: alpha(3), beta(3), gamma(1), delta(1), epsilon(1). F(0) has three main subunits: a(1), b(2) and c(10-14). The alpha and beta chains form an alternating ring which encloses part of the gamma chain. F(1) is attached to F(0) by a central stalk formed by the gamma and epsilon chains, while a peripheral stalk is formed by the delta and b chains.

The protein localises to the cell membrane. Its function is as follows. F(1)F(0) ATP synthase produces ATP from ADP in the presence of a proton or sodium gradient. F-type ATPases consist of two structural domains, F(1) containing the extramembraneous catalytic core and F(0) containing the membrane proton channel, linked together by a central stalk and a peripheral stalk. During catalysis, ATP synthesis in the catalytic domain of F(1) is coupled via a rotary mechanism of the central stalk subunits to proton translocation. Functionally, this protein is part of the stalk that links CF(0) to CF(1). It either transmits conformational changes from CF(0) to CF(1) or is implicated in proton conduction. This chain is ATP synthase subunit delta, found in Kineococcus radiotolerans (strain ATCC BAA-149 / DSM 14245 / SRS30216).